Consider the following 200-residue polypeptide: Snake venom metalloproteinase hemorrhagic factor 2 (200 aa).

Positions 4–200 (KYIELVVVAD…RKPQCILNKP (197 aa)) constitute a Peptidase M12B domain. Position 7 (Glu-7) interacts with Ca(2+). Asn-70 carries N-linked (GlcNAc...) asparagine glycosylation. Asp-91 is a Ca(2+) binding site. 3 cysteine pairs are disulfide-bonded: Cys-115-Cys-195, Cys-155-Cys-179, and Cys-157-Cys-162. His-140 is a Zn(2+) binding site. Glu-141 is a catalytic residue. Positions 144 and 150 each coordinate Zn(2+). Residues Cys-195 and Asn-198 each contribute to the Ca(2+) site.

It belongs to the venom metalloproteinase (M12B) family. P-I subfamily. Monomer. It depends on Zn(2+) as a cofactor. In terms of tissue distribution, expressed by the venom gland.

It localises to the secreted. Snake venom zinc metalloproteinase that induces weak hemorrhage and mild myonecrosis. Shows mild myotoxicity by killing myocytes. Also induces edema in the mouse footpad at doses where hemorrhage is absent. In vitro, degrades laminin, fibronectin, and type IV collagen, suggesting this toxin play a role in local tissue damage by degrading extracellular matrix, and possibly by degrading muscle extracellular matrix. Hemorrhage is not due to cytotoxicity towards endothelial cells in culture, and may only play a minor role in local bleeding characteristic of L.muta envenomations. Also induces the synthesis of several endogenous matrix metalloproteinases, which in turn, may participate in extracellular matrix degradation. The protein is Snake venom metalloproteinase hemorrhagic factor 2 of Lachesis muta muta (Bushmaster).